The chain runs to 787 residues: Integrin beta-6 (787 aa).

The first 21 residues, 1–21 (MGIELVCLFLLLLGRNDHVQG), serve as a signal peptide directing secretion. The PSI domain maps to 22-71 (GCAWSGAETCSDCLLTGPHCAWCSQENFTHLSGAGERCDTPENLLAKGCQ). Residues 22 to 708 (GCAWSGAETC…KDCPKPPNIP (687 aa)) are Extracellular-facing. 19 disulfides stabilise this stretch: C23–C41, C31–C454, C34–C59, C44–C70, C197–C204, C252–C293, C394–C406, C426–C452, C456–C476, C467–C479, C481–C490, C492–C519, C502–C517, C511–C522, C524–C537, C539–C560, C544–C558, C552–C563, and C565–C574. N-linked (GlcNAc...) asparagine glycans are attached at residues N48 and N97. Positions 131-371 (YPVDLYYLMD…QLIISAYEEL (241 aa)) constitute a VWFA domain. Mg(2+)-binding residues include D140, S142, and S144. Ca(2+)-binding residues include S144, D147, D148, and E179. 4 residues coordinate Ca(2+): N235, D237, P239, and E240. E240 lines the Mg(2+) pocket. N-linked (GlcNAc...) asparagine glycosylation is present at N260. Ca(2+)-binding residues include D271 and K355. N387 carries an N-linked (GlcNAc...) asparagine glycan. The N-linked (GlcNAc...) asparagine glycan is linked to N418. 4 I-EGF domains span residues 456 to 491 (CQRE…PRCE), 492 to 538 (CGED…PYCQ), 539 to 575 (CDNF…EYCN), and 576 to 615 (CTTS…PTCE). 2 N-linked (GlcNAc...) asparagine glycosylation sites follow: N463 and N471. An N-linked (GlcNAc...) asparagine glycan is attached at N541. A glycan (N-linked (GlcNAc...) asparagine) is linked at N575. 9 cysteine pairs are disulfide-bonded: C576/C599, C583/C597, C591/C602, C604/C614, C617/C620, C624/C669, C630/C649, C633/C645, and C677/C701. The N-linked (GlcNAc...) asparagine glycan is linked to N695. The chain crosses the membrane as a helical span at residues 709–729 (MIMLGVSLAILLIGVVLLCIW). An interaction with HAX1 region spans residues 730-757 (KLLVSFHDRKEVAKFEAERSKAKWQTGT). The Cytoplasmic segment spans residues 730 to 787 (KLLVSFHDRKEVAKFEAERSKAKWQTGTNPLYRGSTSTFKNVTYKHREKHKVGLSSDG).

The protein belongs to the integrin beta chain family. As to quaternary structure, heterodimer of an alpha and a beta subunit. Interacts with FLNB. Interacts with HAX1. ITGAV:ITGB6 interacts with FBN1. ITGAV:ITGB6 interacts with TGFB1.

Its subcellular location is the cell membrane. The protein resides in the cell junction. It is found in the focal adhesion. In terms of biological role, integrin alpha-V:beta-6 (ITGAV:ITGB6) is a receptor for fibronectin and cytotactin. It recognizes the sequence R-G-D in its ligands. ITGAV:ITGB6 acts as a receptor for fibrillin-1 (FBN1) and mediates R-G-D-dependent cell adhesion to FBN1. Integrin alpha-V:beta-6 (ITGAV:ITGB6) mediates R-G-D-dependent release of transforming growth factor beta-1 (TGF-beta-1) from regulatory Latency-associated peptide (LAP), thereby playing a key role in TGF-beta-1 activation. This is Integrin beta-6 (Itgb6) from Rattus norvegicus (Rat).